We begin with the raw amino-acid sequence, 695 residues long: DNA ligase (695 aa).

NAD(+)-binding positions include 36–40 (DADYD), 85–86 (SL), and Glu123. The active-site N6-AMP-lysine intermediate is the Lys125. 4 residues coordinate NAD(+): Arg146, Glu182, Lys318, and Lys342. Zn(2+) is bound by residues Cys436, Cys439, Cys454, and Cys460. A BRCT domain is found at 617-695 (LQSGDLAGKT…EDGLKALLSQ (79 aa)).

It belongs to the NAD-dependent DNA ligase family. LigA subfamily. Requires Mg(2+) as cofactor. Mn(2+) is required as a cofactor.

It catalyses the reaction NAD(+) + (deoxyribonucleotide)n-3'-hydroxyl + 5'-phospho-(deoxyribonucleotide)m = (deoxyribonucleotide)n+m + AMP + beta-nicotinamide D-nucleotide.. In terms of biological role, DNA ligase that catalyzes the formation of phosphodiester linkages between 5'-phosphoryl and 3'-hydroxyl groups in double-stranded DNA using NAD as a coenzyme and as the energy source for the reaction. It is essential for DNA replication and repair of damaged DNA. The sequence is that of DNA ligase from Bordetella avium (strain 197N).